An 883-amino-acid chain; its full sequence is DNA mismatch repair protein MutS (883 aa).

Residues 1-25 (MSDSVAPDVPVIREGKNPAQHRDRT) form a disordered region. Positions 11–25 (VIREGKNPAQHRDRT) are enriched in basic and acidic residues. 664-671 (GPNASGKS) is a binding site for ATP. Positions 857-883 (RKGNTQPRARKSSAETEAKTQQFELPF) are disordered.

This sequence belongs to the DNA mismatch repair MutS family.

Its function is as follows. This protein is involved in the repair of mismatches in DNA. It is possible that it carries out the mismatch recognition step. This protein has a weak ATPase activity. The polypeptide is DNA mismatch repair protein MutS (Acaryochloris marina (strain MBIC 11017)).